Reading from the N-terminus, the 240-residue chain is DNA repair protein RecO (240 aa).

It belongs to the RecO family.

In terms of biological role, involved in DNA repair and RecF pathway recombination. The chain is DNA repair protein RecO from Pseudoalteromonas atlantica (strain T6c / ATCC BAA-1087).